A 35-amino-acid chain; its full sequence is Photosystem II reaction center protein T (35 aa).

A helical membrane pass occupies residues alanine 3–phenylalanine 23.

This sequence belongs to the PsbT family. In terms of assembly, PSII is composed of 1 copy each of membrane proteins PsbA, PsbB, PsbC, PsbD, PsbE, PsbF, PsbH, PsbI, PsbJ, PsbK, PsbL, PsbM, PsbT, PsbY, PsbZ, Psb30/Ycf12, at least 3 peripheral proteins of the oxygen-evolving complex and a large number of cofactors. It forms dimeric complexes.

It is found in the plastid. It localises to the chloroplast thylakoid membrane. Functionally, found at the monomer-monomer interface of the photosystem II (PS II) dimer, plays a role in assembly and dimerization of PSII. PSII is a light-driven water plastoquinone oxidoreductase, using light energy to abstract electrons from H(2)O, generating a proton gradient subsequently used for ATP formation. The protein is Photosystem II reaction center protein T of Schisandra chinensis (Chinese magnolia vine).